Consider the following 22-residue polypeptide: C-type natriuretic peptide (22 aa).

Cysteines 6 and 22 form a disulfide.

The protein belongs to the natriuretic peptide family.

It localises to the secreted. Functionally, hormone which plays a role in endochondral ossification through regulation of cartilaginous growth plate chondrocytes proliferation and differentiation. May also be vasoactive and natriuretic. Specifically binds and stimulates the cGMP production of the NPR2 receptor. Binds the clearance receptor NPR3. This is C-type natriuretic peptide (NPPC) from Gallus gallus (Chicken).